Here is a 120-residue protein sequence, read N- to C-terminus: Large ribosomal subunit protein uL24 (120 aa).

A disordered region spans residues Met1 to Ala26. Positions Lys10–Val24 are enriched in basic residues.

Belongs to the universal ribosomal protein uL24 family. In terms of assembly, part of the 50S ribosomal subunit. Interacts weakly with protein L4.

In terms of biological role, one of two assembly initiator proteins, it binds directly to the 5'-end of the 23S rRNA, where it nucleates assembly of the 50S subunit. Its function is as follows. Stabilizes the tertiary rRNA structure within the 23S rRNA domain (domain I) to which it binds. Located at the polypeptide exit tunnel on the outside of the subunit. The polypeptide is Large ribosomal subunit protein uL24 (rpl24) (Haloarcula marismortui (strain ATCC 43049 / DSM 3752 / JCM 8966 / VKM B-1809) (Halobacterium marismortui)).